A 349-amino-acid chain; its full sequence is Glycosyltransferase 8 domain-containing protein 2 (349 aa).

Over 1–6 the chain is Cytoplasmic; that stretch reads MAFLRK. Residues 7–24 form a helical; Signal-anchor for type II membrane protein membrane-spanning segment; sequence VNQVLLLLLVLTLCGILY. The Lumenal segment spans residues 25–349; it reads KKVHKGAVLK…AGIFKLHHNR (325 aa). Residue N234 is glycosylated (N-linked (GlcNAc...) asparagine).

Belongs to the glycosyltransferase 8 family.

It localises to the membrane. The chain is Glycosyltransferase 8 domain-containing protein 2 (Glt8d2) from Mus musculus (Mouse).